The sequence spans 1604 residues: Ubiquitin carboxyl-terminal hydrolase 32 (1604 aa).

3 consecutive EF-hand domains span residues Lys91–Lys126, Ile228–Gly263, and Pro264–Val299. Ca(2+) is bound by residues Asp241, Asn243, Asp245, His247, Glu252, Asp277, Asp279, Asp281, and Glu288. Residues Ala369–Ile585 form the DUSP domain. The region spanning Thr734–Gln1567 is the USP domain. Cys743 (nucleophile) is an active-site residue. Tyr1173 is modified (phosphotyrosine). Residue Ser1350 is modified to Phosphoserine. The interval Glu1353 to Glu1432 is disordered. A compositionally biased stretch (polar residues) spans Lys1360–Thr1370. Residues Ser1371–Pro1399 are compositionally biased toward low complexity. A phosphoserine mark is found at Ser1372 and Ser1376. Over residues Gly1415 to Lys1424 the composition is skewed to polar residues. Phosphoserine is present on Ser1454. A disordered region spans residues Ser1484–Thr1504. Residues His1491–Thr1504 show a composition bias toward basic and acidic residues. The active-site Proton acceptor is His1526. Position 1588 is a phosphoserine (Ser1588). Cys1601 bears the Cysteine methyl ester mark. Cys1601 is lipidated: S-farnesyl cysteine. Residues Val1602–Gln1604 constitute a propeptide, removed in mature form.

The protein belongs to the peptidase C19 family.

It localises to the golgi apparatus membrane. The catalysed reaction is Thiol-dependent hydrolysis of ester, thioester, amide, peptide and isopeptide bonds formed by the C-terminal Gly of ubiquitin (a 76-residue protein attached to proteins as an intracellular targeting signal).. Functionally, deubiquitinase that can remove conjugated ubiquitin from target proteins, such as RAB7A and LAMTOR1. Acts as a positive regulator of the mTORC1 signaling by mediating deubiquitination of LAMTOR1, thereby promoting the association between LAMTOR1 and the lysosomal V-ATPase complex and subsequent activation of the mTORC1 complex. The protein is Ubiquitin carboxyl-terminal hydrolase 32 of Mus musculus (Mouse).